The following is a 634-amino-acid chain: MTVDTDKQTLGFQTEVKQLLQLMIHSLYSNKEIFLRELVSNAADAADKLRFEALVKPELLEGSGELRIRVDFDKEARTVTIDDNGIGMSREDAVSHLGTIAKSGTADFLKHLSGDQKKDANLIGQFGVGFYSAFIVADQVDVYSRRAGLPASDGVHWSSRGEGEFEVASVDKPERGTRIVLHLKDGEDSFADGWTLRNILKKYSDHIGLPIEMRKEHYGEDADKPAEPEWEVVNRASALWTRPKSEIKDEEYQEFYKHVAHDAGNPLAWSHNKVEGKLDYTSLLFVPGRAPFDLYHRDSAKGLKLYVQRVFIMDQAEQFLPLYLRFIKGVVDSADLSLNVSREILQSGPVVDSMKSALTKRALDMLEKLAKDKPDDYATFWRNFGQALKEGPAEDYANREKVAGLLRFSSTHDTTGAQSVALADYVGRMTEGQDKLYYLTGESYAQIKDSPHLEVFRKKGIEVLLLTDRIDEWLMSYLTEFDSKSFVDVARGDLDLGKLDSEEDKKAQEEVAKSKEGLASRIKAALGDDVAEVRVSHRLTDSPAILAIGQGDLGLQMRQLLEASGQAVPETKPVFEFNPAHPLIEKLDAEQDMDRFGDLSRVLFDQAALAAGDSLKDPAGYVRRLNKLLLELSA.

An a; substrate-binding region spans residues Met1–Arg342. The tract at residues Glu343–Gln559 is b. A c region spans residues Leu560–Ala634.

It belongs to the heat shock protein 90 family. In terms of assembly, homodimer.

It localises to the cytoplasm. Molecular chaperone. Has ATPase activity. The polypeptide is Chaperone protein HtpG (Xanthomonas campestris pv. campestris (strain ATCC 33913 / DSM 3586 / NCPPB 528 / LMG 568 / P 25)).